The following is a 447-amino-acid chain: Chaperone protein dnaJ A7B, chloroplastic (447 aa).

The N-terminal 86 residues, 1–86, are a transit peptide targeting the chloroplast; that stretch reads MALLQFGGTL…HRRSSRFIVR (86 aa). Residues 90-154 enclose the J domain; that stretch reads DFYSTLGVSR…EKRSIYDKYG (65 aa). The CR-type zinc-finger motif lies at 217–298; it reads GVEKEIEITR…CGGDGRVRKT (82 aa). The Zn(2+) site is built by C230, C233, C247, C250, C273, C276, C286, and C289. 4 CXXCXGXG motif repeats span residues 230–237, 247–254, 273–280, and 286–293; these read CNTCDGTG, CKTCGGQG, CNTCGGTG, and CNTCGGDG.

Belongs to the DnaJ family. Interacts with PCNA. As to expression, expressed in roots, stems, leaves and panicles.

The protein resides in the plastid. Its subcellular location is the chloroplast. Its function is as follows. Plays pivotal roles in chloroplast development. Is essential for the regulation of chloroplast development and differentiation. This is Chaperone protein dnaJ A7B, chloroplastic from Oryza sativa subsp. japonica (Rice).